Consider the following 249-residue polypeptide: 2,3-bisphosphoglycerate-dependent phosphoglycerate mutase (249 aa).

Substrate contacts are provided by residues 8-15, 21-22, arginine 60, 87-90, lysine 98, 114-115, and 183-184; these read RHGESTWN, TG, ERHY, RR, and GN. Histidine 9 acts as the Tele-phosphohistidine intermediate in catalysis. Glutamate 87 functions as the Proton donor/acceptor in the catalytic mechanism.

It belongs to the phosphoglycerate mutase family. BPG-dependent PGAM subfamily. Homodimer.

It carries out the reaction (2R)-2-phosphoglycerate = (2R)-3-phosphoglycerate. It participates in carbohydrate degradation; glycolysis; pyruvate from D-glyceraldehyde 3-phosphate: step 3/5. In terms of biological role, catalyzes the interconversion of 2-phosphoglycerate and 3-phosphoglycerate. This is 2,3-bisphosphoglycerate-dependent phosphoglycerate mutase from Burkholderia mallei (strain NCTC 10247).